The following is a 339-amino-acid chain: Tetraacyldisaccharide 4'-kinase (339 aa).

Residue 58-65 (TVGGSGKT) coordinates ATP.

Belongs to the LpxK family.

It carries out the reaction a lipid A disaccharide + ATP = a lipid IVA + ADP + H(+). It participates in glycolipid biosynthesis; lipid IV(A) biosynthesis; lipid IV(A) from (3R)-3-hydroxytetradecanoyl-[acyl-carrier-protein] and UDP-N-acetyl-alpha-D-glucosamine: step 6/6. In terms of biological role, transfers the gamma-phosphate of ATP to the 4'-position of a tetraacyldisaccharide 1-phosphate intermediate (termed DS-1-P) to form tetraacyldisaccharide 1,4'-bis-phosphate (lipid IVA). This is Tetraacyldisaccharide 4'-kinase from Shewanella baltica (strain OS155 / ATCC BAA-1091).